The following is a 520-amino-acid chain: Cholesterol side-chain cleavage enzyme, mitochondrial (520 aa).

The transit peptide at 1 to 39 (MLARGLPLRSALVKACPPLLNTGREGWGHHRVGTGEGAG) directs the protein to the mitochondrion. A disordered region spans residues 27–48 (WGHHRVGTGEGAGISTRTPRPY). C461 provides a ligand contact to heme.

The protein belongs to the cytochrome P450 family. In terms of assembly, interacts with FDX1/adrenodoxin. Heme is required as a cofactor.

Its subcellular location is the mitochondrion inner membrane. The catalysed reaction is 6 reduced [adrenodoxin] + cholesterol + 3 O2 + 6 H(+) = 4-methylpentanal + pregnenolone + 6 oxidized [adrenodoxin] + 4 H2O. It carries out the reaction 2 reduced [adrenodoxin] + cholesterol + O2 + 2 H(+) = (22R)-hydroxycholesterol + 2 oxidized [adrenodoxin] + H2O. The enzyme catalyses (22R)-hydroxycholesterol + 2 reduced [adrenodoxin] + O2 + 2 H(+) = (20R,22R)-20,22-dihydroxycholesterol + 2 oxidized [adrenodoxin] + H2O. It catalyses the reaction (20R,22R)-20,22-dihydroxycholesterol + 2 reduced [adrenodoxin] + O2 + 2 H(+) = 4-methylpentanal + pregnenolone + 2 oxidized [adrenodoxin] + 2 H2O. It participates in lipid metabolism; C21-steroid hormone metabolism. It functions in the pathway steroid metabolism; cholesterol metabolism. In terms of biological role, a cytochrome P450 monooxygenase that catalyzes the side-chain hydroxylation and cleavage of cholesterol to pregnenolone, the precursor of most steroid hormones. Catalyzes three sequential oxidation reactions of cholesterol, namely the hydroxylation at C22 followed with the hydroxylation at C20 to yield 20R,22R-hydroxycholesterol that is further cleaved between C20 and C22 to yield the C21-steroid pregnenolone and 4-methylpentanal. Mechanistically, uses molecular oxygen inserting one oxygen atom into a substrate and reducing the second into a water molecule. Two electrons are provided by NADPH via a two-protein mitochondrial transfer system comprising flavoprotein FDXR (adrenodoxin/ferredoxin reductase) and nonheme iron-sulfur protein FDX1 or FDX2 (adrenodoxin/ferredoxin). The sequence is that of Cholesterol side-chain cleavage enzyme, mitochondrial from Capra hircus (Goat).